The sequence spans 756 residues: NADP-dependent malic enzyme (756 aa).

Residues Met1–Ser428 are malic enzyme. Tyr39 acts as the Proton donor in catalysis. Lys94 serves as the catalytic Proton acceptor. The a divalent metal cation site is built by Glu136, Asp137, and Asp162. NADP(+)-binding positions include Ala195 to Ala198, Asn288, and Asn320. Positions Leu429–Glu756 are phosphate acetyltransferase.

In the N-terminal section; belongs to the malic enzymes family. The protein in the C-terminal section; belongs to the phosphate acetyltransferase and butyryltransferase family. Mg(2+) serves as cofactor. It depends on Mn(2+) as a cofactor.

It catalyses the reaction (S)-malate + NADP(+) = pyruvate + CO2 + NADPH. The enzyme catalyses oxaloacetate + H(+) = pyruvate + CO2. In Haemophilus influenzae (strain ATCC 51907 / DSM 11121 / KW20 / Rd), this protein is NADP-dependent malic enzyme (maeB).